Consider the following 245-residue polypeptide: Ribonuclease 3 (245 aa).

The RNase III domain maps to 19 to 148 (FRAFQQKLGI…FIGALYLDQG (130 aa)). Mg(2+) is bound at residue Glu61. The active site involves Asp65. Mg(2+) contacts are provided by Asp134 and Glu137. Glu137 is a catalytic residue. A DRBM domain is found at 174 to 243 (DYKSQLQELI…AAEALRKLKE (70 aa)).

This sequence belongs to the ribonuclease III family. As to quaternary structure, homodimer. It depends on Mg(2+) as a cofactor.

The protein resides in the cytoplasm. It catalyses the reaction Endonucleolytic cleavage to 5'-phosphomonoester.. Functionally, digests double-stranded RNA. Involved in the processing of primary rRNA transcript to yield the immediate precursors to the large and small rRNAs (23S and 16S). Processes some mRNAs, and tRNAs when they are encoded in the rRNA operon. Processes pre-crRNA and tracrRNA of type II CRISPR loci if present in the organism. In Bacillus cytotoxicus (strain DSM 22905 / CIP 110041 / 391-98 / NVH 391-98), this protein is Ribonuclease 3.